The following is a 309-amino-acid chain: Diadenylate cyclase (309 aa).

Residues 144 to 301 (TITLYELFET…DGKIVFETDP (158 aa)) form the DAC domain.

This sequence belongs to the adenylate cyclase family. DacZ subfamily. Mn(2+) is required as a cofactor.

The enzyme catalyses 2 ATP = 3',3'-c-di-AMP + 2 diphosphate. Functionally, diadenylate cyclase that catalyzes the condensation of 2 ATP molecules into cyclic di-AMP (c-di-AMP). c-di-AMP is a second messenger for intracellular signal transduction involved in the control of important regulatory processes such as osmoregulation. This is Diadenylate cyclase from Methanocaldococcus jannaschii (strain ATCC 43067 / DSM 2661 / JAL-1 / JCM 10045 / NBRC 100440) (Methanococcus jannaschii).